The sequence spans 477 residues: Cysteine--tRNA ligase (477 aa).

A Zn(2+)-binding site is contributed by C34. The 'HIGH' region motif lies at 36–46 (PTVYDFAHIGN). The Zn(2+) site is built by C235, H260, and E264. A 'KMSKS' region motif is present at residues 293–297 (KMSKS). K296 is an ATP binding site.

Belongs to the class-I aminoacyl-tRNA synthetase family. Monomer. It depends on Zn(2+) as a cofactor.

The protein resides in the cytoplasm. The catalysed reaction is tRNA(Cys) + L-cysteine + ATP = L-cysteinyl-tRNA(Cys) + AMP + diphosphate. In Mesorhizobium japonicum (strain LMG 29417 / CECT 9101 / MAFF 303099) (Mesorhizobium loti (strain MAFF 303099)), this protein is Cysteine--tRNA ligase.